A 511-amino-acid chain; its full sequence is NAD(P)H-quinone oxidoreductase subunit 2, chloroplastic (511 aa).

Transmembrane regions (helical) follow at residues 15–35 (LLPEGIVTILLVFILLIDLTF), 39–59 (VLSWLLYIPLVGLVCSMVVLL), 78–98 (SLSIAFRFFILLSAVLCILLS), 108–128 (ALTEFFVLLLTAVIGGMLLSG), 132–152 (LIMIFLSLETLGLSSYLLTGY), 167–187 (LLIGAASSSILLYGLSLLYGL), 210–230 (FASWVALIFITVGIGFKVAAA), 244–264 (PTPVVAFLSVGSKAAGLALAT), 278–298 (WHLLFQVLASLSMILGNLIAI), 306–326 (MLGYSSVSQAGFLMIGLIAGN), 334–354 (LVYMLLYIFMNLGAFACIILF), 377–397 (VFCFSISLLSLGGIPPLAGFF), 410–430 (GFYILVFIGLFTSVISIYYYL), and 466–486 (LGIGLCVLGSVLAGVLVNPII).

It belongs to the complex I subunit 2 family. In terms of assembly, NDH is composed of at least 16 different subunits, 5 of which are encoded in the nucleus.

The protein localises to the plastid. It localises to the chloroplast thylakoid membrane. The catalysed reaction is a plastoquinone + NADH + (n+1) H(+)(in) = a plastoquinol + NAD(+) + n H(+)(out). It catalyses the reaction a plastoquinone + NADPH + (n+1) H(+)(in) = a plastoquinol + NADP(+) + n H(+)(out). Functionally, NDH shuttles electrons from NAD(P)H:plastoquinone, via FMN and iron-sulfur (Fe-S) centers, to quinones in the photosynthetic chain and possibly in a chloroplast respiratory chain. The immediate electron acceptor for the enzyme in this species is believed to be plastoquinone. Couples the redox reaction to proton translocation, and thus conserves the redox energy in a proton gradient. The sequence is that of NAD(P)H-quinone oxidoreductase subunit 2, chloroplastic from Chlorokybus atmophyticus (Soil alga).